The primary structure comprises 585 residues: Pheromone-processing carboxypeptidase KEX1 (585 aa).

The first 18 residues, 1–18, serve as a signal peptide directing secretion; it reads MCLLARVRHIEITPDVNG. The Lumenal segment spans residues 19 to 469; the sequence is NMFFWHFQNK…DTARWEAYRK (451 aa). Catalysis depends on residues S135 and D335. N-linked (GlcNAc...) asparagine glycosylation is found at N386 and N394. The active site involves H397. The N-linked (GlcNAc...) asparagine glycan is linked to N447. The chain crosses the membrane as a helical span at residues 470–490; that stretch reads SGEIVLVIVAFSAAGWGWWVW. At 491 to 585 the chain is on the cytoplasmic side; it reads RERKKRRGYM…KGKGKEKMSG (95 aa). Residues 526–585 form a disordered region; it reads AADLEAGDFDENELDDLHMRTPTTVMGGEGNDPRYSVGAASEDSEDEEDVKGKGKEKMSG. Residues 530 to 539 show a composition bias toward acidic residues; the sequence is EAGDFDENEL. The segment covering 575–585 has biased composition (basic and acidic residues); it reads VKGKGKEKMSG.

It belongs to the peptidase S10 family.

It localises to the golgi apparatus. It is found in the trans-Golgi network membrane. The enzyme catalyses Preferential release of a C-terminal arginine or lysine residue.. Its function is as follows. Protease with a carboxypeptidase B-like function involved in the C-terminal processing of the lysine and arginine residues from protein precursors. Promotes cell fusion and is involved in the programmed cell death. This Podospora anserina (strain S / ATCC MYA-4624 / DSM 980 / FGSC 10383) (Pleurage anserina) protein is Pheromone-processing carboxypeptidase KEX1 (KEX1).